Consider the following 478-residue polypeptide: Zinc metalloproteinase/disintegrin ussurin (478 aa).

Residues 1-20 (MIQVLLVTICLAAFPYQGSS) form the signal peptide. Positions 21–190 (IILESGNVND…KKASPLVVTT (170 aa)) are excised as a propeptide. A Peptidase M12B domain is found at 193-389 (RYVELVVVAD…RNPQCILNKP (197 aa)). Residues E196 and D280 each coordinate Ca(2+). Cystine bridges form between C304–C384, C344–C368, and C346–C351. H329 is a binding site for Zn(2+). E330 is a catalytic residue. The Zn(2+) site is built by H333 and H339. The Ca(2+) site is built by C384 and N387. Positions 390-413 (LRTDIVSTPVSGNELLEAGEECDC) are excised as a propeptide. Residues 397 to 478 (TPVSGNELLE…AGCPRNPFHA (82 aa)) form the Disintegrin domain. 6 disulfide bridges follow: C411/C426, C413/C421, C420/C443, C434/C440, C439/C464, and C452/C471. A Cell attachment site motif is present at residues 456 to 458 (RGD).

It belongs to the venom metalloproteinase (M12B) family. P-II subfamily. P-IIa sub-subfamily. As to quaternary structure, monomer. It depends on Zn(2+) as a cofactor. In terms of tissue distribution, expressed by the venom gland.

Its subcellular location is the secreted. Impairs hemostasis in the envenomed animal. Functionally, inhibits platelet aggregation induced by ADP, thrombin, platelet-activating factor and collagen. Acts by inhibiting fibrinogen interaction with platelet receptors GPIIb/GPIIIa (ITGA2B/ITGB3). The polypeptide is Zinc metalloproteinase/disintegrin ussurin (Gloydius ussuriensis (Ussuri mamushi)).